We begin with the raw amino-acid sequence, 238 residues long: Response regulator receiver protein Anae109_2439 (238 aa).

Response regulatory domains lie at 3 to 117 (RYLI…AAAR) and 121 to 228 (LVAV…ERLH). D52 and D169 each carry 4-aspartylphosphate.

Post-translationally, is diphosphorylated by GchK.

Its function is as follows. Member of the two-component regulatory system GcHK/Anae109_2439. Is involved in a signal transduction system responding to oxygen availability. This Anaeromyxobacter sp. (strain Fw109-5) protein is Response regulator receiver protein Anae109_2439.